An 88-amino-acid chain; its full sequence is Small ribosomal subunit protein uS15 (88 aa).

This sequence belongs to the universal ribosomal protein uS15 family. As to quaternary structure, part of the 30S ribosomal subunit. Forms a bridge to the 50S subunit in the 70S ribosome, contacting the 23S rRNA.

Functionally, one of the primary rRNA binding proteins, it binds directly to 16S rRNA where it helps nucleate assembly of the platform of the 30S subunit by binding and bridging several RNA helices of the 16S rRNA. Forms an intersubunit bridge (bridge B4) with the 23S rRNA of the 50S subunit in the ribosome. The polypeptide is Small ribosomal subunit protein uS15 (Borrelia turicatae (strain 91E135)).